Reading from the N-terminus, the 514-residue chain is MVSNEYLTHGDKDEFDPAKWSSTPGELPPRSPATNLNVLIVGAGPAGLITALECWRKGHNVVRILERSQGPVYTGDIIVIGPSAICTLRHWPEICRELDQDRSDSVMYYRRHNGELILGPTTLGYNSPEHLAQRHGLPYVAPHQVRRQFYRMLLRQVARIGLQVEYGQRVERYFEDEAAGVGGVVTADGSVRAAHLVVAADAFKTRSDLLIAGRHAPTRSSGMSVYRAALPTELALRDPAFQARWGEVVARGESHHEFWIGPGMHLGLFISPNFVAYGLSPRDKFLQPGGIEPIESWDPDVNPQEVLDVLHRIPDWDPAIEGLIRHTPPRATVHWPLLWRNLRREWTSKAGRVVQVGDAAHTTVPASISGGTLAIEDAVTLAACLQLACAGGAPGGAPLGARIYNLLRYQRVSCVQKMSFVNSENLGAADMNEVLKKDPEKVKVRFPKWLFQHDPEAYVYEKYGQAYAHLVLGTDFQNTNFPPGHDFKMWTIEEIHADILAGKKVADLLDGDWD.

Residues 1-29 form a disordered region; the sequence is MVSNEYLTHGDKDEFDPAKWSSTPGELPP. Residues 8-17 show a composition bias toward basic and acidic residues; it reads THGDKDEFDP. FAD-binding residues include Val79 and Arg146. Arg227 is a catalytic residue. The FAD site is built by Asp358 and Gly371.

This sequence belongs to the paxM FAD-dependent monooxygenase family. Requires FAD as cofactor.

Its pathway is secondary metabolite biosynthesis. Functionally, FAD-dependent monooxygenase; part of the gene cluster that mediates the biosynthesis of the tetrahydroxanthone dimer secalonic acid D. The pathway begins with the synthesis of atrochrysone thioester by the polyketide synthase AacuL. The atrochrysone carboxyl ACP thioesterase AacuM then breaks the thioester bond and releases the atrochrysone carboxylic acid from AacuL. Atrochrysone carboxylic acid is decarboxylated by the decarboxylase AacuI, and oxidized by the anthrone oxygenase AacuG to yield emodin. Emodin is then reduced to emodin hydroquinone by a yet unidentified oxidoreductase. A-ring reduction by the short chain dehydrogenase AacuN, dehydration by the scytalone dehydratase-like protein AacuK and probable spontaneous re-oxidation, results in overall deoxygenation to chrysophanol. Baeyer-Villiger oxidation by the Baeyer-Villiger monooxygenase (BVMO) AacuH then yields monodictyphenone. Monodictyphenone is transformed into compounds with the tetrahydroxanthone skeleton via methylesterification by the methyltransferase AacuQ, followed by the action of the flavin-dependent monooxygenase AacuC, the isomerase AacuP, and the short chain dehydrogenase/reductase AacuF or AacuD. AacuF and AacuD should accept the same compound as a substrate but perform the ketoreduction with a different stereoselectivity, thus yielding blennolides B and A, respectively. In the final step of the biosynthesis, the cytochrome P450 monooxygenase AacuE accepts blennolide B and/or blennolide A to conduct the dimerization reaction to furnish the tetrahydroxanthone dimers, secalonic acids D, B, and F. The protein is FAD-dependent monooxygenase AacuC of Aspergillus aculeatus (strain ATCC 16872 / CBS 172.66 / WB 5094).